A 122-amino-acid chain; its full sequence is Small ribosomal subunit protein uS13 (122 aa).

The disordered stretch occupies residues 94–122 (RGLPVRGQKTKTNARTRKGPRKTVAGKRK).

This sequence belongs to the universal ribosomal protein uS13 family. As to quaternary structure, part of the 30S ribosomal subunit. Forms a loose heterodimer with protein S19. Forms two bridges to the 50S subunit in the 70S ribosome.

Functionally, located at the top of the head of the 30S subunit, it contacts several helices of the 16S rRNA. In the 70S ribosome it contacts the 23S rRNA (bridge B1a) and protein L5 of the 50S subunit (bridge B1b), connecting the 2 subunits; these bridges are implicated in subunit movement. Contacts the tRNAs in the A and P-sites. The polypeptide is Small ribosomal subunit protein uS13 (Syntrophotalea carbinolica (strain DSM 2380 / NBRC 103641 / GraBd1) (Pelobacter carbinolicus)).